Reading from the N-terminus, the 385-residue chain is Probable dual-specificity RNA methyltransferase RlmN (385 aa).

Residues 1–35 form a disordered region; the sequence is MNVKEPAEEAAIQLRTERQRIEPEGEEQSEQPTDL. Glu121 (proton acceptor) is an active-site residue. A Radical SAM core domain is found at 132–367; that stretch reads TRDRVTVCLS…AVIREERGQD (236 aa). Cys139 and Cys372 are disulfide-bonded. Cys146, Cys150, and Cys153 together coordinate [4Fe-4S] cluster. S-adenosyl-L-methionine is bound by residues 198-199, Ser230, 253-255, and Asn329; these read GE and SLH. Cys372 acts as the S-methylcysteine intermediate in catalysis.

This sequence belongs to the radical SAM superfamily. RlmN family. [4Fe-4S] cluster serves as cofactor.

It is found in the cytoplasm. The catalysed reaction is adenosine(2503) in 23S rRNA + 2 reduced [2Fe-2S]-[ferredoxin] + 2 S-adenosyl-L-methionine = 2-methyladenosine(2503) in 23S rRNA + 5'-deoxyadenosine + L-methionine + 2 oxidized [2Fe-2S]-[ferredoxin] + S-adenosyl-L-homocysteine. It carries out the reaction adenosine(37) in tRNA + 2 reduced [2Fe-2S]-[ferredoxin] + 2 S-adenosyl-L-methionine = 2-methyladenosine(37) in tRNA + 5'-deoxyadenosine + L-methionine + 2 oxidized [2Fe-2S]-[ferredoxin] + S-adenosyl-L-homocysteine. Specifically methylates position 2 of adenine 2503 in 23S rRNA and position 2 of adenine 37 in tRNAs. The chain is Probable dual-specificity RNA methyltransferase RlmN from Heliobacterium modesticaldum (strain ATCC 51547 / Ice1).